A 189-amino-acid chain; its full sequence is Elongation factor P 2 (189 aa).

This sequence belongs to the elongation factor P family.

The protein resides in the cytoplasm. It functions in the pathway protein biosynthesis; polypeptide chain elongation. In terms of biological role, involved in peptide bond synthesis. Stimulates efficient translation and peptide-bond synthesis on native or reconstituted 70S ribosomes in vitro. Probably functions indirectly by altering the affinity of the ribosome for aminoacyl-tRNA, thus increasing their reactivity as acceptors for peptidyl transferase. In Mesorhizobium japonicum (strain LMG 29417 / CECT 9101 / MAFF 303099) (Mesorhizobium loti (strain MAFF 303099)), this protein is Elongation factor P 2.